The sequence spans 310 residues: Olfactory receptor 5P56 (310 aa).

The Extracellular segment spans residues 1-25; the sequence is MEAQNHTTVKEFILLGLTENSTLRV. 2 N-linked (GlcNAc...) asparagine glycosylation sites follow: Asn5 and Asn20. A helical membrane pass occupies residues 26–46; sequence ILFMIFLGIYTVTLVGNFSII. At 47 to 54 the chain is on the cytoplasmic side; the sequence is SLIRSCPQ. A helical transmembrane segment spans residues 55-75; the sequence is LHTPMYLFLSHLALVDIGFST. Residues 76 to 99 are Extracellular-facing; the sequence is SITPIMLTGFLGHTVTLSVAACVA. Cys97 and Cys189 are disulfide-bonded. The chain crosses the membrane as a helical span at residues 100–120; it reads QFCIAVTFGTVECFLLAVMAY. The Cytoplasmic segment spans residues 121-133; sequence DRYVAICSPLLYS. A helical membrane pass occupies residues 134–154; that stretch reads THMSPRICFLLVGASYVGGCV. Over 155-196 the chain is Extracellular; sequence NSGTFTSCLLILSFCGPNQIDHFFCDFPAVLKLSCSDVSIIG. Residues 197-217 form a helical membrane-spanning segment; that stretch reads IIPSISAGSIIVITVFVIAVS. Topologically, residues 218–237 are cytoplasmic; it reads YTYILITILNMRSTEGRHKA. A helical membrane pass occupies residues 238 to 258; that stretch reads FSTCTSHLTAVTLYYGTITFI. Over 259–271 the chain is Extracellular; that stretch reads YVMPKSNYSTAQN. N-linked (GlcNAc...) asparagine glycosylation occurs at Asn265. The chain crosses the membrane as a helical span at residues 272-292; sequence KILSVFYTVVIPMLNPLIYSL. Residues 293 to 310 lie on the Cytoplasmic side of the membrane; the sequence is RNRDVKEALRKAIIRIFP.

It belongs to the G-protein coupled receptor 1 family.

It is found in the cell membrane. Functionally, potential odorant receptor. This Mus musculus (Mouse) protein is Olfactory receptor 5P56.